The chain runs to 434 residues: MTTQVVNVIGAGLAGSEAAYQIAKRGVQVRLYEMRPVRQTPAHHTDKFAELVCSNSLRANTLTNAVGVIKEEMRLMDSVIIRAADECSVPAGGALAVDRHEFAAKVTEYVKNHPNVTVMNEEITEIPEGPTIIATGPLTSPDLSAQLKELTGEDYFYFYDAAAPIVEKDSIDMNKVYLKSRYDKGEAAYLNCPMTEEEFDRFYEALIAAETVPLKEFEKEIFFEGCMPVEVMASRGRQTLVFGPMKPVGLEDPKTGKTPYAVVQLRQDDAAGTLYNIVGFQTHLKWGPQKEVLQLIPGLENAEIVRYGVMHRNTFINSPNLLRPTYQYKQRDDLFFAGQMTGVEGYVESAASGLLAGINAARLVKGEEPVVLPPVTAMGSMANYITATNAKNFQPMNANFGLFAPLEKKIKKKAERNEAYATRALEMIRNFVNI.

An FAD-binding site is contributed by 10-15; that stretch reads GAGLAG.

The protein belongs to the MnmG family. TrmFO subfamily. It depends on FAD as a cofactor.

It is found in the cytoplasm. The enzyme catalyses uridine(54) in tRNA + (6R)-5,10-methylene-5,6,7,8-tetrahydrofolate + NADH + H(+) = 5-methyluridine(54) in tRNA + (6S)-5,6,7,8-tetrahydrofolate + NAD(+). It carries out the reaction uridine(54) in tRNA + (6R)-5,10-methylene-5,6,7,8-tetrahydrofolate + NADPH + H(+) = 5-methyluridine(54) in tRNA + (6S)-5,6,7,8-tetrahydrofolate + NADP(+). In terms of biological role, catalyzes the folate-dependent formation of 5-methyl-uridine at position 54 (M-5-U54) in all tRNAs. The polypeptide is Methylenetetrahydrofolate--tRNA-(uracil-5-)-methyltransferase TrmFO (Bacillus anthracis (strain A0248)).